The chain runs to 354 residues: S-adenosylmethionine:tRNA ribosyltransferase-isomerase (354 aa).

Belongs to the QueA family. As to quaternary structure, monomer.

It localises to the cytoplasm. The enzyme catalyses 7-aminomethyl-7-carbaguanosine(34) in tRNA + S-adenosyl-L-methionine = epoxyqueuosine(34) in tRNA + adenine + L-methionine + 2 H(+). Its pathway is tRNA modification; tRNA-queuosine biosynthesis. Transfers and isomerizes the ribose moiety from AdoMet to the 7-aminomethyl group of 7-deazaguanine (preQ1-tRNA) to give epoxyqueuosine (oQ-tRNA). This Pseudomonas syringae pv. tomato (strain ATCC BAA-871 / DC3000) protein is S-adenosylmethionine:tRNA ribosyltransferase-isomerase.